The sequence spans 173 residues: Probable F-box protein At1g27490 (173 aa).

The F-box domain maps to 1 to 46; the sequence is MEWSLPVDLQEEILSRVPAKSLARWKSTPKQWKGPISIEFLHLLRS.

This is Probable F-box protein At1g27490 from Arabidopsis thaliana (Mouse-ear cress).